We begin with the raw amino-acid sequence, 208 residues long: Interleukin-6 (208 aa).

The signal sequence occupies residues 1-20 (MNSLSTIAFSLGLLLVTATA). Cysteines 67 and 73 form a disulfide. Ser76 carries the post-translational modification Phosphoserine. The cysteines at positions 96 and 106 are disulfide-linked. The N-linked (GlcNAc...) asparagine glycan is linked to Asn167.

Belongs to the IL-6 superfamily. As to quaternary structure, component of a hexamer of two molecules each of IL6, IL6R and IL6ST; first binds to IL6R to associate with the signaling subunit IL6ST. Interacts with IL6R (via the N-terminal ectodomain); this interaction may be affected by IL6R-binding with SORL1, hence decreasing IL6 cis signaling. Interacts with SORL1 (via the N-terminal ectodomain); this interaction leads to IL6 internalization and lysosomal degradation. May form a trimeric complex with the soluble SORL1 ectodomain and soluble IL6R receptor; this interaction might stabilize circulating IL6, hence promoting IL6 trans signaling.

Its subcellular location is the secreted. In terms of biological role, cytokine with a wide variety of biological functions in immunity, tissue regeneration, and metabolism. Binds to IL6R, then the complex associates to the signaling subunit IL6ST/gp130 to trigger the intracellular IL6-signaling pathway. The interaction with the membrane-bound IL6R and IL6ST stimulates 'classic signaling', whereas the binding of IL6 and soluble IL6R to IL6ST stimulates 'trans-signaling'. Alternatively, 'cluster signaling' occurs when membrane-bound IL6:IL6R complexes on transmitter cells activate IL6ST receptors on neighboring receiver cells. IL6 is a potent inducer of the acute phase response. Rapid production of IL6 contributes to host defense during infection and tissue injury, but excessive IL6 synthesis is involved in disease pathology. In the innate immune response, is synthesized by myeloid cells, such as macrophages and dendritic cells, upon recognition of pathogens through toll-like receptors (TLRs) at the site of infection or tissue injury. In the adaptive immune response, is required for the differentiation of B cells into immunoglobulin-secreting cells. Plays a major role in the differentiation of CD4(+) T cell subsets. Essential factor for the development of T follicular helper (Tfh) cells that are required for the induction of germinal-center formation. Required to drive naive CD4(+) T cells to the Th17 lineage. Also required for proliferation of myeloma cells and the survival of plasmablast cells. Its function is as follows. Acts as an essential factor in bone homeostasis and on vessels directly or indirectly by induction of VEGF, resulting in increased angiogenesis activity and vascular permeability. Induces, through 'trans-signaling' and synergistically with IL1B and TNF, the production of VEGF. Involved in metabolic controls, is discharged into the bloodstream after muscle contraction increasing lipolysis and improving insulin resistance. 'Trans-signaling' in central nervous system also regulates energy and glucose homeostasis. Mediates, through GLP-1, crosstalk between insulin-sensitive tissues, intestinal L cells and pancreatic islets to adapt to changes in insulin demand. Also acts as a myokine. Plays a protective role during liver injury, being required for maintenance of tissue regeneration. Also has a pivotal role in iron metabolism by regulating HAMP/hepcidin expression upon inflammation or bacterial infection. Through activation of IL6ST-YAP-NOTCH pathway, induces inflammation-induced epithelial regeneration. This is Interleukin-6 (IL6) from Delphinapterus leucas (Beluga whale).